A 151-amino-acid polypeptide reads, in one-letter code: Large ribosomal subunit protein bL9 (151 aa).

The protein belongs to the bacterial ribosomal protein bL9 family.

Its function is as follows. Binds to the 23S rRNA. This Chlorobium chlorochromatii (strain CaD3) protein is Large ribosomal subunit protein bL9.